We begin with the raw amino-acid sequence, 401 residues long: Argininosuccinate synthase (401 aa).

Residues 7-15 (AYSGGLDTS) and A34 each bind ATP. 2 residues coordinate L-citrulline: Y85 and S90. Position 115 (G115) interacts with ATP. L-aspartate-binding residues include T117, N121, and D122. Residue N121 participates in L-citrulline binding. Residues R125, S174, S183, E259, and Y271 each coordinate L-citrulline.

It belongs to the argininosuccinate synthase family. Type 1 subfamily. In terms of assembly, homotetramer.

It is found in the cytoplasm. The enzyme catalyses L-citrulline + L-aspartate + ATP = 2-(N(omega)-L-arginino)succinate + AMP + diphosphate + H(+). The protein operates within amino-acid biosynthesis; L-arginine biosynthesis; L-arginine from L-ornithine and carbamoyl phosphate: step 2/3. This Desulfitobacterium hafniense (strain DSM 10664 / DCB-2) protein is Argininosuccinate synthase.